The chain runs to 380 residues: 3-dehydroquinate synthase (380 aa).

NAD(+) contacts are provided by residues 100 to 104 (GAASD), 124 to 125 (TT), K137, and K146. 3 residues coordinate Zn(2+): E179, H251, and H267. The segment at 320–343 (YMQRDKKNMQSNDTDSDKDSREMP) is disordered.

The protein belongs to the sugar phosphate cyclases superfamily. Dehydroquinate synthase family. It depends on NAD(+) as a cofactor. Co(2+) serves as cofactor. Zn(2+) is required as a cofactor.

The protein resides in the cytoplasm. It catalyses the reaction 7-phospho-2-dehydro-3-deoxy-D-arabino-heptonate = 3-dehydroquinate + phosphate. It functions in the pathway metabolic intermediate biosynthesis; chorismate biosynthesis; chorismate from D-erythrose 4-phosphate and phosphoenolpyruvate: step 2/7. Catalyzes the conversion of 3-deoxy-D-arabino-heptulosonate 7-phosphate (DAHP) to dehydroquinate (DHQ). The polypeptide is 3-dehydroquinate synthase (Tropheryma whipplei (strain Twist) (Whipple's bacillus)).